Here is a 394-residue protein sequence, read N- to C-terminus: General receptor for phosphoinositides 1-associated scaffold protein (394 aa).

The segment at 1–51 is disordered; sequence MTLRRLRKLQQKEEATAAPDLAGRAPDSEAARAAPTPSGPPAAAAPPGAPG. The segment covering 37–49 has biased composition (pro residues); it reads PSGPPAAAAPPGA. The residue at position 76 (Thr-76) is a Phosphothreonine. A Phosphoserine modification is found at Ser-93. Residues 100–189 enclose the PDZ domain; the sequence is VLTLEKGDNQ…VLRLETLYGT (90 aa). The segment at 180–257 is interaction with PSCD3; it reads VLRLETLYGT…GAGLLPGSLP (78 aa). Tyr-236 bears the Phosphotyrosine mark. Residue Arg-269 is modified to Omega-N-methylarginine. The tract at residues 293 to 318 is disordered; it reads EPQALPPPPPPARAPGPGSAETPASV. Pro residues predominate over residues 296–306; sequence ALPPPPPPARA. Residue Ser-386 is modified to Phosphoserine.

As to quaternary structure, heteromer. Composed of TAMALIN, CYTH2 and at least one GRM1. Also interacts with CYTH3, GRM2, GRM3 and GRM5. Expressed in brain.

It is found in the cytoplasm. Its subcellular location is the perinuclear region. The protein resides in the cell membrane. It localises to the postsynaptic cell membrane. Functionally, plays a role in intracellular trafficking and contributes to the macromolecular organization of group 1 metabotropic glutamate receptors (mGluRs) at synapses. The chain is General receptor for phosphoinositides 1-associated scaffold protein from Rattus norvegicus (Rat).